A 220-amino-acid chain; its full sequence is MAISSVENGVARRGLMVVISSPSGAGKSTIARLLLEDPKMKLSLSISVTTRQRRPSEIDGVHYHFITIREFERLRDNDELIEWAEVHGNFYGTLRETAEIALADGQDMLFDIDWQGADQLQAKMPADVVSIFILPPTMRELQQRLNRRAEDTAEVIETRLQNARFEIQKWVKYDYIVINEDLDRSYAAIKSIINAERLRRDRRPGLFDFVTGLLEEDPGM.

The region spanning 14-194 (GLMVVISSPS…SYAAIKSIIN (181 aa)) is the Guanylate kinase-like domain. 21–28 (SPSGAGKS) serves as a coordination point for ATP.

The protein belongs to the guanylate kinase family.

The protein resides in the cytoplasm. The enzyme catalyses GMP + ATP = GDP + ADP. In terms of biological role, essential for recycling GMP and indirectly, cGMP. The chain is Guanylate kinase from Brucella abortus (strain 2308).